A 133-amino-acid chain; its full sequence is Putative N-acetylgalactosamine permease IIC component 2 (133 aa).

The Cytoplasmic segment spans residues 1–2 (ME). In terms of domain architecture, PTS EIIC type-4 spans 1–133 (MEISLLQAFA…CDLATNPRRI (133 aa)). A helical membrane pass occupies residues 3–23 (ISLLQAFALGIIAFIAGLDMF). The Periplasmic portion of the chain corresponds to 24–32 (NGLTHMHRP). A helical membrane pass occupies residues 33-53 (VVLGPLVGLVLGDLHTGILTG). Topologically, residues 54–65 (GTLELVWMGLAP) are cytoplasmic. Residues 66–86 (LAGAQPPNVIIGTIVGTAFAI) traverse the membrane as a helical segment. At 87 to 93 (TTGVKPD) the chain is on the periplasmic side. The helical transmembrane segment at 94-114 (VAVGVAVPFAVAVQMGITFLF) threads the bilayer. Residues 115-133 (SVMSGVMSRCDLATNPRRI) are Cytoplasmic-facing.

It is found in the cell inner membrane. Functionally, the phosphoenolpyruvate-dependent sugar phosphotransferase system (PTS), a major carbohydrate active -transport system, catalyzes the phosphorylation of incoming sugar substrates concomitant with their translocation across the cell membrane. This system is involved in N-acetylgalactosamine transport. The polypeptide is Putative N-acetylgalactosamine permease IIC component 2 (agaW) (Escherichia coli (strain K12)).